A 90-amino-acid polypeptide reads, in one-letter code: Small ribosomal subunit protein uS15c (90 aa).

The protein belongs to the universal ribosomal protein uS15 family. As to quaternary structure, part of the 30S ribosomal subunit.

It is found in the plastid. Its subcellular location is the chloroplast. In Piper cenocladum (Ant piper), this protein is Small ribosomal subunit protein uS15c (rps15).